The following is a 511-amino-acid chain: Aldehyde dehydrogenase 2, mitochondrial (511 aa).

The N-terminal 21 residues, 1–21, are a transit peptide targeting the mitochondrion; sequence MSKSKTKTDKRNQSSLSRIKL. The interval 72-92 is disordered; the sequence is VSEKSQHDSTEEDITQVSEKS. 274-279 provides a ligand contact to NAD(+); that stretch reads GSTLVG. The Proton acceptor role is filled by E297. C331 acts as the Nucleophile in catalysis.

This sequence belongs to the aldehyde dehydrogenase family.

It is found in the mitochondrion matrix. The enzyme catalyses an aldehyde + NAD(+) + H2O = a carboxylate + NADH + 2 H(+). Its pathway is alcohol metabolism; ethanol degradation; acetate from ethanol: step 2/2. The protein is Aldehyde dehydrogenase 2, mitochondrial (ALD2) of Saccharomyces cerevisiae (Baker's yeast).